An 871-amino-acid chain; its full sequence is Rho guanine nucleotide exchange factor 26 (871 aa).

Disordered stretches follow at residues 1-49 (MDGE…LLIT), 86-233 (AQRR…NPSV), and 288-310 (PLGHAGEESEVDNDVDSPGSLRR). The residue at position 22 (Ser-22) is a Phosphoserine. Residues 136–156 (PAPPPPPVLRPPRTPNAPAPC) are compositionally biased toward pro residues. Polar residues predominate over residues 173 to 192 (PTANGLAANNDSPGSGSQSG). A Phosphoserine modification is found at Ser-392. Residues 439–623 (KRQEAIFEVI…SKLVRLCNEG (185 aa)) form the DH domain. Residues 655–782 (WLVKRGELTA…WITALGHSSG (128 aa)) form the PH domain. The SH3 domain occupies 789–850 (TSLTQVEIVR…PMECAKEITC (62 aa)).

As to quaternary structure, interacts with ICAM1 and RHOG. In terms of tissue distribution, isoform 1 is broadly expressed, with highest levels in liver (at protein level). Certain mRNA species appear to be specifically expressed in prostate and liver.

The protein resides in the cell projection. It localises to the ruffle. In terms of biological role, activates RhoG GTPase by promoting the exchange of GDP by GTP. Required for the formation of membrane ruffles during macropinocytosis. Required for the formation of cup-like structures during trans-endothelial migration of leukocytes. In case of Salmonella enterica infection, activated by SopB, which induces cytoskeleton rearrangements and promotes bacterial entry. This chain is Rho guanine nucleotide exchange factor 26 (ARHGEF26), found in Homo sapiens (Human).